The primary structure comprises 300 residues: UDP-N-acetylenolpyruvoylglucosamine reductase (300 aa).

Residues 27–192 (KVGGPADYLA…ISAKFALKPG (166 aa)) form the FAD-binding PCMH-type domain. R171 is an active-site residue. The active-site Proton donor is the S221. The active site involves E291.

Belongs to the MurB family. The cofactor is FAD.

It is found in the cytoplasm. It catalyses the reaction UDP-N-acetyl-alpha-D-muramate + NADP(+) = UDP-N-acetyl-3-O-(1-carboxyvinyl)-alpha-D-glucosamine + NADPH + H(+). It functions in the pathway cell wall biogenesis; peptidoglycan biosynthesis. In terms of biological role, cell wall formation. In Streptococcus agalactiae serotype Ia (strain ATCC 27591 / A909 / CDC SS700), this protein is UDP-N-acetylenolpyruvoylglucosamine reductase.